We begin with the raw amino-acid sequence, 100 residues long: Co-chaperonin GroES (100 aa).

Belongs to the GroES chaperonin family. In terms of assembly, heptamer of 7 subunits arranged in a ring. Interacts with the chaperonin GroEL.

It localises to the cytoplasm. Functionally, together with the chaperonin GroEL, plays an essential role in assisting protein folding. The GroEL-GroES system forms a nano-cage that allows encapsulation of the non-native substrate proteins and provides a physical environment optimized to promote and accelerate protein folding. GroES binds to the apical surface of the GroEL ring, thereby capping the opening of the GroEL channel. The protein is Co-chaperonin GroES of Mycolicibacterium vanbaalenii (strain DSM 7251 / JCM 13017 / BCRC 16820 / KCTC 9966 / NRRL B-24157 / PYR-1) (Mycobacterium vanbaalenii).